A 394-amino-acid chain; its full sequence is S-adenosylmethionine synthase 1 (394 aa).

E11 is a Mg(2+) binding site. H17 contributes to the ATP binding site. K(+) is bound at residue E45. Positions 58 and 101 each coordinate L-methionine. Residues 169 to 171 (DGK), 237 to 240 (SGRF), D248, 254 to 255 (RK), A271, K275, and K279 each bind ATP. An L-methionine-binding site is contributed by D248. K279 is an L-methionine binding site.

It belongs to the AdoMet synthase family. Homotetramer. The cofactor is Mn(2+). It depends on Mg(2+) as a cofactor. Requires Co(2+) as cofactor. K(+) serves as cofactor.

It localises to the cytoplasm. The catalysed reaction is L-methionine + ATP + H2O = S-adenosyl-L-methionine + phosphate + diphosphate. It participates in amino-acid biosynthesis; S-adenosyl-L-methionine biosynthesis; S-adenosyl-L-methionine from L-methionine: step 1/1. Catalyzes the formation of S-adenosylmethionine from methionine and ATP. The reaction comprises two steps that are both catalyzed by the same enzyme: formation of S-adenosylmethionine (AdoMet) and triphosphate, and subsequent hydrolysis of the triphosphate. The polypeptide is S-adenosylmethionine synthase 1 (SAM1) (Hordeum vulgare (Barley)).